The sequence spans 585 residues: Pyruvate kinase (585 aa).

Arg32 is a substrate binding site. Positions 34, 36, 66, and 67 each coordinate K(+). Residue 34–37 coordinates ATP; sequence NFSH. Residues Arg73 and Lys156 each coordinate ATP. Glu221 is a binding site for Mg(2+). Gly244, Asp245, and Thr277 together coordinate substrate. Asp245 lines the Mg(2+) pocket.

The protein belongs to the pyruvate kinase family. This sequence in the C-terminal section; belongs to the PEP-utilizing enzyme family. It depends on Mg(2+) as a cofactor. K(+) serves as cofactor.

It carries out the reaction pyruvate + ATP = phosphoenolpyruvate + ADP + H(+). Its pathway is carbohydrate degradation; glycolysis; pyruvate from D-glyceraldehyde 3-phosphate: step 5/5. This is Pyruvate kinase (pyk) from Staphylococcus aureus (strain USA300).